The following is an 897-amino-acid chain: MSSSRSQSPETPKAASEEREEEEKESSEQPDTPKTSSEKSASRSQSPRESREVSQETETSENQEKIKEKDDGDDQPGTPNSYRSRETSPAPKRSKETRESESPEKSPVRSRSPRRSSARSPSRSPRRRRERSSERKQSEEPAPLPEKKKKEPLDILRTRTGGAYIPPAKLRLMQQQISDKQSEQYQRMNWERMKKKIHGLVNRVNAKNLVQIVRELLQENVIRSKGLLCRDIIQAQAFSPGFSNVYAALAAVINSKFPHVGELLLRRLIVQFKRSFRRNDRGVTVNVIKFIAHLINQQVAHEVLALEIMILMLEEPTDDSVEVAIAFLKECGAKLLEIAPAALNSVYDRLRAILMETERSENALDRRIQYMIETAMQIRKDKFAAYPAVIEDLDLIEEEDQIIHTLNLEDAVDPENGLNVFKLDPEFEKNEEVYEEIRKEIIGNADISDEDGGDELDDEEEGSDVEEAPKKTTEIIDNTDQNLTAFRREVYLTMQSSLDYQEAAHKLLKMKIPDSMQNELCAMLVDCCAQQRTYERFYGMLIERFCRLRLEYQQYFEKLCQDTYSTIHRIDITKLRNLARLIAHLLSTDAIDWKILADMKMTEEDTTSSGRIYIKYIFNELVEAMGMVKLHSRVTDPTLAHCFVGLFPRTNPNSARFSINFFTMIGLGGLTLELREWLAKGLKKKKGMLDQLKAESSSDSSSSSDSSDSSDSSDSDDSSDSSSDSSSSSESEPEPPKKKKKKNSEESSKKKEKENIGRRDRGDKRAERHRDQSVENKDKDRRRRQDSDENRRPERGDDRKDRSKDRRRQDSDDEDRKGRERREDSGERRRGDRDRRDRNKDQEDHREDRRDRSKDREDRRDRRRHDSDDDRKTRRDRSEERGGRRREVESDDRRRRR.

Positions 1–10 (MSSSRSQSPE) are enriched in polar residues. The tract at residues 1-155 (MSSSRSQSPE…EKKKKEPLDI (155 aa)) is disordered. Basic and acidic residues-rich tracts occupy residues 36–54 (SSEKSASRSQSPRESREVS), 93–107 (RSKETRESESPEKSP), and 131–155 (RSSERKQSEEPAPLPEKKKKEPLDI). Residues 194–382 (KKKIHGLVNR…ETAMQIRKDK (189 aa)) form the MIF4G domain. The interval 444–472 (NADISDEDGGDELDDEEEGSDVEEAPKKT) is disordered. Acidic residues predominate over residues 447–466 (ISDEDGGDELDDEEEGSDVE). The region spanning 485 to 601 (AFRREVYLTM…DWKILADMKM (117 aa)) is the MI domain. Composition is skewed to low complexity over residues 689–710 (LDQLKAESSSDSSSSSDSSDSS) and 720–730 (DSSSDSSSSSE). Positions 689–897 (LDQLKAESSS…VESDDRRRRR (209 aa)) are disordered. Residues 743 to 897 (NSEESSKKKE…VESDDRRRRR (155 aa)) are compositionally biased toward basic and acidic residues.

This sequence belongs to the CWC22 family. In terms of tissue distribution, expressed in germ cells, oocytes, and sperm cells.

The protein localises to the nucleus. It localises to the nucleus speckle. Its function is as follows. Required for pre-mRNA splicing and for exon-junction complex (EJC) assembly. Hinders EIF4A3 from non-specifically binding RNA and escorts it to the splicing machinery to promote EJC assembly on mature mRNAs. Through its role in EJC assembly, required for nonsense-mediated mRNA decay. Plays a role in the nuclear retention of unspliced mRNAs. Plays a role in sex determination. Required for early embryogenesis and tissue differentiation. In Caenorhabditis elegans, this protein is Pre-mRNA-splicing factor CWC22 homolog.